Here is a 151-residue protein sequence, read N- to C-terminus: Ribosome maturation factor RimP (151 aa).

Belongs to the RimP family.

It localises to the cytoplasm. Its function is as follows. Required for maturation of 30S ribosomal subunits. The protein is Ribosome maturation factor RimP of Hydrogenovibrio crunogenus (strain DSM 25203 / XCL-2) (Thiomicrospira crunogena).